We begin with the raw amino-acid sequence, 1040 residues long: MSRHSQLKLAMPSVHGAPATAPGSPMNAKARSVKLGLGVNQRTGRVQWCPGLTCCKMLLLLPVVMLPLTLVLILIMRLDGMLAALQLNEQRMRDLRNSHSEVPVYMEDYEALLPEGSTYNDLINEEFILPASKRTQLQILAAERARRCQPYRYGNGESMELEERNTLMKDSRTSFLPLGIPRECLGSGIELDIKPIDEEAYQRQKKRYQDIAPYWLEKIRIRERREAERHAEEASAEISEATAALQSFWNEEGTREGIRMTQAKTMKRYMDNKVDPCVDFYKYACGNWERLHPIPKDKAGFDTFEMLRESLDLVLRNLLEKNTPVHSAAELRKSPVRNTLFKLNEQGEGEGEADQAAELTAERLRRHIVSKRQLLNRVLVRYKRYTNGTKRKRLIETPRERTKEEEAAPPVVLPKDKTKDKSDNEEQLHVPTDFLKPHQDAQLKAKNLYRSCVNSAVLAKRGLEPLHTLIRELGGWPVLESQWSESNFNWQVLAATLRRYNNDILIVQWVGADIKNSEENIVQFDQTGLGLPTREYFLQPSNAKYLQAYQRYMAEVMHKMGASKADAQRVASELVAFETQLAGITAPAEQRLNVTKLYKRMTLDQLQAVVPEIKWRAYLQSLQDREVLGTEEVVIYAVEYMSKLVTLLDETDPRTVSNYMMWRFVRHRINNVDDRFDDIKQSFYHALFGREESPQRWKVCIAQVNTNMGMAVGSMFVSRYFDNNSKRDTLRMTHDLQQAFRDILKTTDWLDDTTKQLAEEKVNAMSLKIGYPDFILNPSELNSKYAGIEIYPEKYFENTLNVLLHTAKTEQAKLHERVNKTNWQTAPAIVNAYYSRNKNQIMFPAGILQPPFYHRHFPKSLNFGGIGVVIGHELTHGFDDKGRLFDRNGNIHKWWTDSSIRGFDERARCIIAQYSNYTVEEVGIVLNGESTQGENIADNGGLRQAFHAYQRWLKEHPSEVSDEILPGLNMTGPQLFFLNFGQVWCGAMRPEAIRNKLNTAIHSPGRFRVIGTLSNSVDFAREFNCPLGSPMNPQKKCSVW.

The disordered stretch occupies residues 1–27 (MSRHSQLKLAMPSVHGAPATAPGSPMN). A required for maintaining muscle integrity region spans residues 1 to 45 (MSRHSQLKLAMPSVHGAPATAPGSPMNAKARSVKLGLGVNQRTGR). Residues 1-55 (MSRHSQLKLAMPSVHGAPATAPGSPMNAKARSVKLGLGVNQRTGRVQWCPGLTCC) are Cytoplasmic-facing. The helical; Signal-anchor for type II membrane protein transmembrane segment at 56–76 (KMLLLLPVVMLPLTLVLILIM) threads the bilayer. The Extracellular segment spans residues 77 to 1040 (RLDGMLAALQ…MNPQKKCSVW (964 aa)). Residues 251-1040 (EEGTREGIRM…MNPQKKCSVW (790 aa)) form the Peptidase M13 domain. 4 disulfide bridges follow: cysteine 277/cysteine 1025, cysteine 285/cysteine 985, cysteine 452/cysteine 700, and cysteine 909/cysteine 1037. 4 N-linked (GlcNAc...) asparagine glycosylation sites follow: asparagine 387, asparagine 593, asparagine 723, and asparagine 819. Residue histidine 872 participates in Zn(2+) binding. Residue glutamate 873 is part of the active site. Histidine 876 contacts Zn(2+). N-linked (GlcNAc...) asparagine glycosylation occurs at asparagine 916. Glutamate 934 contributes to the Zn(2+) binding site. Aspartate 938 functions as the Proton donor in the catalytic mechanism. An N-linked (GlcNAc...) asparagine glycan is attached at asparagine 969.

This sequence belongs to the peptidase M13 family. As to quaternary structure, interacts (via intracellular domain) with the putative carbohydrate kinase CG3534. Zn(2+) is required as a cofactor. In terms of tissue distribution, expressed in the gonads and testes of adults, and the adult and larval brain (at protein level). In embryos, expressed in the pericardial, muscle founder and glia cells (at protein level). In stage 12 embryos, expressed in specific dorsal muscle founder cells such as DA1 and DO2, and also in the certain pericardial progenitor cells where expression persists throughout embryogenesis. Expressed in the glia cells of the embryonic, larval and adult central nervous system. Expressed in the somatic muscles of larvae, pupae and adults. Isoform A: Detected in the male abdomen (at protein level). Isoform B: Not detected in the male or female abdomen (at protein level).

The protein localises to the cell membrane. It localises to the sarcoplasmic reticulum. Its subcellular location is the cytoplasm. The enzyme catalyses Preferential cleavage of polypeptides between hydrophobic residues, particularly with Phe or Tyr at P1'.. Functionally, metalloendoprotease which cleaves peptides at the amino side of hydrophobic residues - such as the hormones Akh and Dh31, and the neuropeptides Allatostatins (AST1, AST2, AST3 and AST4), Crz, Drosulfakinins (DSK-I and DSK-II), Lk, sNPF and the tachykinin peptides TK-1, TK-2, TK-4 and TK-5. Functions in female fertility, memory formation and may also act in regulating insulin signaling and food intake. Likely to be involved in controlling feeding behavior and the expression of insulin-like peptides by cleaving various regulatory peptides that include certain Drosulfakinins, Allatostatins and tachykinin peptides. Required in females for normal patterns of egg laying and hatching. Required in the dorsal paired medial neurons for the proper formation of long-term (LTM) and middle-term memories (MTM). Also required in the mushroom body neurons where it functions redundantly with neprilysins Nep2 and Nep3, in normal LTM formation. In terms of biological role, cleaves angiotensin-1 and tachykinin neuropeptide substance P. Functions in maintaining muscle integrity, possibly independently of its endopeptidase activity. The polypeptide is Neprilysin-4 (Drosophila melanogaster (Fruit fly)).